The chain runs to 284 residues: MDAIKKKMQMLKLDKENAIDRAEQAEADKKQAEDRCKQLEEEQQALQKKLKGTEDEVEKYSESVKDAQEKLEQAEKKATDAEADVASLNRRIQLVEEELDRAQERLATALQKLEEAEKAADESERGMKVIENRAMKDEEKMELQEMQLKEAKHIAEDSDRKYEEVARKLVILEGELERSEERAEVAESKCGDLEEELKIVTNNLKSLEAQADKYSTKEDKYEEEIKLLEEKLKEAETRAEFAERSVAKLEKTIDDLEDEVYAQKMKYKAISEELDNALNDITSL.

An N-acetylmethionine modification is found at methionine 1. Residues 1-78 form a disordered region; sequence MDAIKKKMQM…EKLEQAEKKA (78 aa). Residues 1 to 284 adopt a coiled-coil conformation; sequence MDAIKKKMQM…DNALNDITSL (284 aa). Basic and acidic residues-rich tracts occupy residues 12–40 and 51–78; these read KLDKENAIDRAEQAEADKKQAEDRCKQLE and KGTEDEVEKYSESVKDAQEKLEQAEKKA. The residue at position 53 (threonine 53) is a Phosphothreonine. Phosphoserine; by PIK3CG is present on serine 61. The residue at position 79 (threonine 79) is a Phosphothreonine. The residue at position 87 (serine 87) is a Phosphoserine. Threonine 108 bears the Phosphothreonine mark. The segment at 117–136 is disordered; that stretch reads EKAADESERGMKVIENRAMK. Residues serine 158, serine 206, and serine 215 each carry the phosphoserine modification. Position 252 is a phosphothreonine (threonine 252). Residue tyrosine 261 is modified to Phosphotyrosine. Serine 271 is modified (phosphoserine). Threonine 282 carries the phosphothreonine modification. Position 283 is a phosphoserine (serine 283).

The protein belongs to the tropomyosin family. In terms of assembly, homodimer. Heterodimer of an alpha (TPM1, TPM3 or TPM4) and a beta (TPM2) chain. Post-translationally, phosphorylated on Ser-61 by PIK3CG. Phosphorylation on Ser-61 is required for ADRB2 internalization.

Its subcellular location is the cytoplasm. It is found in the cytoskeleton. Its function is as follows. Binds to actin filaments in muscle and non-muscle cells. Plays a central role, in association with the troponin complex, in the calcium dependent regulation of vertebrate striated muscle contraction. Smooth muscle contraction is regulated by interaction with caldesmon. In non-muscle cells is implicated in stabilizing cytoskeleton actin filaments. The non-muscle isoform may have a role in agonist-mediated receptor internalization. This is Tropomyosin beta chain (Tpm2) from Mus musculus (Mouse).